The chain runs to 191 residues: Protein GrpE (191 aa).

The protein belongs to the GrpE family. Homodimer.

Its subcellular location is the cytoplasm. Functionally, participates actively in the response to hyperosmotic and heat shock by preventing the aggregation of stress-denatured proteins, in association with DnaK and GrpE. It is the nucleotide exchange factor for DnaK and may function as a thermosensor. Unfolded proteins bind initially to DnaJ; upon interaction with the DnaJ-bound protein, DnaK hydrolyzes its bound ATP, resulting in the formation of a stable complex. GrpE releases ADP from DnaK; ATP binding to DnaK triggers the release of the substrate protein, thus completing the reaction cycle. Several rounds of ATP-dependent interactions between DnaJ, DnaK and GrpE are required for fully efficient folding. The protein is Protein GrpE of Listeria monocytogenes serotype 4a (strain HCC23).